Consider the following 421-residue polypeptide: Subtilisin-like protease 2 (421 aa).

The N-terminal stretch at 1 to 16 (MQLLNFGLLLLPFVAG) is a signal peptide. Positions 17–122 (DLAPQPEPLL…VHPDQHVYLA (106 aa)) are excised as a propeptide. Residues 36 to 122 (QYIVTLKEGL…VHPDQHVYLA (87 aa)) form the Inhibitor I9 domain. Residues 131–421 (RWGLGYMSSK…ERKFTLPKYY (291 aa)) enclose the Peptidase S8 domain. Residues D169 and H201 each act as charge relay system in the active site. N248, N261, and N348 each carry an N-linked (GlcNAc...) asparagine glycan. The active-site Charge relay system is the S357. N-linked (GlcNAc...) asparagine glycosylation is present at N388.

Belongs to the peptidase S8 family.

It localises to the secreted. Functionally, secreted subtilisin-like serine protease with keratinolytic activity that contributes to pathogenicity. The polypeptide is Subtilisin-like protease 2 (SUB2) (Arthroderma benhamiae (strain ATCC MYA-4681 / CBS 112371) (Trichophyton mentagrophytes)).